Here is a 101-residue protein sequence, read N- to C-terminus: Small ribosomal subunit protein uS14 (101 aa).

The segment at 1-24 (MAKVSSIKKNEKRKKLSQSLHNKR) is disordered. Basic residues predominate over residues 10–24 (NEKRKKLSQSLHNKR).

It belongs to the universal ribosomal protein uS14 family. As to quaternary structure, part of the 30S ribosomal subunit. Contacts proteins S3 and S10.

Binds 16S rRNA, required for the assembly of 30S particles and may also be responsible for determining the conformation of the 16S rRNA at the A site. This chain is Small ribosomal subunit protein uS14, found in Rickettsia bellii (strain OSU 85-389).